The primary structure comprises 635 residues: Replication factor C small subunit (635 aa).

51–58 is an ATP binding site; sequence GPPGTGKT.

This sequence belongs to the activator 1 small subunits family. RfcS subfamily. In terms of assembly, heteromultimer composed of small subunits (RfcS) and large subunits (RfcL). Post-translationally, this protein undergoes a protein self splicing that involves a post-translational excision of the intervening region (intein) followed by peptide ligation.

Part of the RFC clamp loader complex which loads the PCNA sliding clamp onto DNA. The sequence is that of Replication factor C small subunit (rfcS) from Methanopyrus kandleri (strain AV19 / DSM 6324 / JCM 9639 / NBRC 100938).